The following is a 468-amino-acid chain: Lipase 1 (468 aa).

An N-terminal signal peptide occupies residues M1–A16. The N-linked (GlcNAc...) asparagine glycan is linked to N79. A disulfide bridge connects residues C112 and C285. S196 serves as the catalytic Charge relay system. N-linked (GlcNAc...) asparagine glycosylation is found at N231 and N319. Catalysis depends on charge relay system residues D348 and H381. An intrachain disulfide couples C364 to C409. N417, N422, and N451 each carry an N-linked (GlcNAc...) asparagine glycan.

The protein belongs to the AB hydrolase superfamily. Lipase family. Class Lip subfamily.

It is found in the secreted. It carries out the reaction a triacylglycerol + H2O = a diacylglycerol + a fatty acid + H(+). Its function is as follows. Secreted lipase that is able to hydrolyze both the neutral triacylglycerols and the monopalmitate ester Tween 40, allowing the use of hydrolyzed products as carbon sources. Has broad lipolytic activity, which may be important for colonization and subsequent infection, therefore contributing to the persistence and virulence in human tissue. This Candida albicans (strain SC5314 / ATCC MYA-2876) (Yeast) protein is Lipase 1.